Here is a 1164-residue protein sequence, read N- to C-terminus: DNA-directed RNA polymerase 132 kDa polypeptide (1164 aa).

The protein belongs to the RNA polymerase beta chain family. As to quaternary structure, the DNA-dependent RNA polymerase used for intermediate and late genes expression consists of eight subunits (147) kDa, (133) kDa, (35) kDa, (30) kDa, (22) kDa, (19) kDa, (18) kDa and (7) kDa totalling more than 500 kDa in mass. The same holoenzyme, with the addition of the transcription-specificity factor RAP94, is used for early gene expression.

The protein localises to the virion. It carries out the reaction RNA(n) + a ribonucleoside 5'-triphosphate = RNA(n+1) + diphosphate. In terms of biological role, part of the DNA-dependent RNA polymerase which catalyzes the transcription of viral DNA into RNA using the four ribonucleoside triphosphates as substrates. Responsible for the transcription of early, intermediate and late genes. DNA-dependent RNA polymerase associates with the early transcription factor (ETF), itself composed of D6 and A7, thereby allowing the early genes transcription. Late transcription, and probably also intermediate transcription, require newly synthesized RNA polymerase. The sequence is that of DNA-directed RNA polymerase 132 kDa polypeptide (RPO132) from Cowpox virus (strain GRI-90 / Grishak) (CPV).